Consider the following 540-residue polypeptide: Chaperonin GroEL 2/3 (540 aa).

ATP contacts are provided by residues 30–33 (TLGP), K51, 87–91 (DGTTT), G415, 479–481 (NAA), and D495.

It belongs to the chaperonin (HSP60) family. Forms a cylinder of 14 subunits composed of two heptameric rings stacked back-to-back. Interacts with the co-chaperonin GroES.

It localises to the cytoplasm. The catalysed reaction is ATP + H2O + a folded polypeptide = ADP + phosphate + an unfolded polypeptide.. Together with its co-chaperonin GroES, plays an essential role in assisting protein folding. The GroEL-GroES system forms a nano-cage that allows encapsulation of the non-native substrate proteins and provides a physical environment optimized to promote and accelerate protein folding. This Paraburkholderia xenovorans (strain LB400) protein is Chaperonin GroEL 2/3.